The chain runs to 262 residues: Glutamate racemase (262 aa).

Residues Asp-5–Ser-6 and Tyr-37–Gly-38 each bind substrate. Cys-69 acts as the Proton donor/acceptor in catalysis. Asn-70–Thr-71 is a substrate binding site. Catalysis depends on Cys-181, which acts as the Proton donor/acceptor. Thr-182–His-183 contributes to the substrate binding site.

It belongs to the aspartate/glutamate racemases family.

The catalysed reaction is L-glutamate = D-glutamate. It participates in cell wall biogenesis; peptidoglycan biosynthesis. Functionally, provides the (R)-glutamate required for cell wall biosynthesis. The polypeptide is Glutamate racemase (Buchnera aphidicola subsp. Acyrthosiphon pisum (strain APS) (Acyrthosiphon pisum symbiotic bacterium)).